We begin with the raw amino-acid sequence, 209 residues long: Cytidylate kinase (209 aa).

9 to 17 (GPAAAGKGT) contacts ATP.

The protein belongs to the cytidylate kinase family. Type 1 subfamily.

Its subcellular location is the cytoplasm. It carries out the reaction CMP + ATP = CDP + ADP. It catalyses the reaction dCMP + ATP = dCDP + ADP. This is Cytidylate kinase from Granulibacter bethesdensis (strain ATCC BAA-1260 / CGDNIH1).